The following is a 498-amino-acid chain: Neoxanthin synthase, chloroplastic (498 aa).

Residues 1 to 42 (METLLKPFPSLLLSSPTPYRSIVQQNPSFLSPTTKKKSRKCL) constitute a chloroplast transit peptide.

The protein belongs to the lycopene cyclase family. Expressed exclusively in chromoplast-containing tissues of flowers and fruits. Expressed in preanthesis flowers.

It is found in the plastid. The protein resides in the chloroplast. The enzyme catalyses all-trans-violaxanthin = all-trans-neoxanthin. It catalyses the reaction a carotenoid psi-end group = a carotenoid beta-end derivative. It participates in carotenoid biosynthesis; neoxanthin biosynthesis. Its pathway is carotenoid biosynthesis; beta-carotene biosynthesis. In terms of biological role, involved in the synthesis of neoxanthin, the last product of carotenoid synthesis and a precursor of abscisic acid. Involved in the beta-carotene biosynthesis. The protein is Neoxanthin synthase, chloroplastic of Solanum lycopersicum (Tomato).